A 100-amino-acid polypeptide reads, in one-letter code: DNA-directed RNA polymerase subunit Rpo11 (100 aa).

It belongs to the archaeal Rpo11/eukaryotic RPB11/RPC19 RNA polymerase subunit family. Part of the RNA polymerase complex.

The protein localises to the cytoplasm. It carries out the reaction RNA(n) + a ribonucleoside 5'-triphosphate = RNA(n+1) + diphosphate. DNA-dependent RNA polymerase (RNAP) catalyzes the transcription of DNA into RNA using the four ribonucleoside triphosphates as substrates. The protein is DNA-directed RNA polymerase subunit Rpo11 of Picrophilus torridus (strain ATCC 700027 / DSM 9790 / JCM 10055 / NBRC 100828 / KAW 2/3).